A 287-amino-acid chain; its full sequence is ATP synthase gamma chain (287 aa).

This sequence belongs to the ATPase gamma chain family. As to quaternary structure, F-type ATPases have 2 components, CF(1) - the catalytic core - and CF(0) - the membrane proton channel. CF(1) has five subunits: alpha(3), beta(3), gamma(1), delta(1), epsilon(1). CF(0) has three main subunits: a, b and c.

It localises to the cell inner membrane. Its function is as follows. Produces ATP from ADP in the presence of a proton gradient across the membrane. The gamma chain is believed to be important in regulating ATPase activity and the flow of protons through the CF(0) complex. This is ATP synthase gamma chain from Sodalis glossinidius (strain morsitans).